A 354-amino-acid chain; its full sequence is Neuronal growth regulator 1 (354 aa).

An N-terminal signal peptide occupies residues 1-37 (MDMMLLVQGACCSNQWLAAVLLSLCCLLPSCLPAGQS). Ig-like C2-type domains follow at residues 38-134 (VDFP…VHLT), 139-221 (PKIY…KVVV), and 225-313 (PTIQ…LPLN). Residues C60 and C118 are joined by a disulfide bond. N-linked (GlcNAc...) asparagine glycans are attached at residues N73 and N155. 2 cysteine pairs are disulfide-bonded: C160–C203 and C245–C297. A Phosphotyrosine modification is found at Y187. N-linked (GlcNAc...) asparagine glycans are attached at residues N275, N286, N294, and N307. The GPI-anchor amidated glycine moiety is linked to residue G324. A propeptide spans 325 to 354 (SADVLFSCWYLVLTLSSFTSIFYLKNAILQ) (removed in mature form).

Belongs to the immunoglobulin superfamily. IgLON family.

It localises to the cell membrane. Functionally, may be involved in cell-adhesion. May function as a trans-neural growth-promoting factor in regenerative axon sprouting in the mammalian brain. The chain is Neuronal growth regulator 1 (NEGR1) from Homo sapiens (Human).